Reading from the N-terminus, the 215-residue chain is Probable peptidyl-prolyl cis-trans isomerase (215 aa).

In terms of domain architecture, PPIase cyclophilin-type spans 38–197; it reads DGIYAVMETN…RRGAAAKRFV (160 aa).

Belongs to the cyclophilin-type PPIase family.

It catalyses the reaction [protein]-peptidylproline (omega=180) = [protein]-peptidylproline (omega=0). PPIases accelerate the folding of proteins. It catalyzes the cis-trans isomerization of proline imidic peptide bonds in oligopeptides. This is Probable peptidyl-prolyl cis-trans isomerase (ppiB) from Treponema pallidum (strain Nichols).